Reading from the N-terminus, the 398-residue chain is MRAGTPRALAVAVLLEVDRGGRAQLLLDRALRRSPWPERDRAYATFLVYGALRRLRLLDHLLAPLLPRPEGLPPEVRWILRLGALEWLEGKPDHARVSPWVEEAKRRYPGLAGLVNAVLRRLAPREAPECVRLSLPDWLCEAWRGFFGDVAFAEGFNEPAPLFVTAYREVDLRPGPVPGSYLWEGPKTDFSALGLQPQNPASLFAAKLLEARPGERVLDLCGGAGLKAFYLAAQGAEVVSYDLNRRRQEAGARTARRLGLWVHYRTQDLTRPVPERAKKVLLDAPCTGTGTFRAHPELRYRLSPEDPARMAALQLQLLETAAQATEEGGVLVYSVCTLTEEEGEGVVRAFLARHPEFRPEPVQPPFPVLARGLGVYVDPRGGLDGFYYAKLRRVNSQA.

S-adenosyl-L-methionine contacts are provided by residues 221–227 (CGGAGLK), Asp-242, Asp-268, and Asp-283. Residue Cys-336 is the Nucleophile of the active site.

Belongs to the class I-like SAM-binding methyltransferase superfamily. RsmB/NOP family.

The protein resides in the cytoplasm. It carries out the reaction cytidine(967) in 16S rRNA + S-adenosyl-L-methionine = 5-methylcytidine(967) in 16S rRNA + S-adenosyl-L-homocysteine + H(+). Specifically methylates the cytosine at position 967 (m5C967) of 16S rRNA. The chain is Ribosomal RNA small subunit methyltransferase B from Thermus thermophilus (strain ATCC 27634 / DSM 579 / HB8).